We begin with the raw amino-acid sequence, 298 residues long: N-acetylmuramic acid 6-phosphate etherase (298 aa).

Residues 55–218 (IHAQVSGGGR…STGLMIKSGK (164 aa)) enclose the SIS domain. The Proton donor role is filled by Glu-83. Residue Glu-114 is part of the active site.

This sequence belongs to the GCKR-like family. MurNAc-6-P etherase subfamily. As to quaternary structure, homodimer.

It carries out the reaction N-acetyl-D-muramate 6-phosphate + H2O = N-acetyl-D-glucosamine 6-phosphate + (R)-lactate. It participates in amino-sugar metabolism; 1,6-anhydro-N-acetylmuramate degradation. Its pathway is amino-sugar metabolism; N-acetylmuramate degradation. It functions in the pathway cell wall biogenesis; peptidoglycan recycling. Functionally, specifically catalyzes the cleavage of the D-lactyl ether substituent of MurNAc 6-phosphate, producing GlcNAc 6-phosphate and D-lactate. Together with AnmK, is also required for the utilization of anhydro-N-acetylmuramic acid (anhMurNAc) either imported from the medium or derived from its own cell wall murein, and thus plays a role in cell wall recycling. In Escherichia coli O17:K52:H18 (strain UMN026 / ExPEC), this protein is N-acetylmuramic acid 6-phosphate etherase.